Here is a 355-residue protein sequence, read N- to C-terminus: C-C chemokine receptor type 3 (355 aa).

Over 1–34 (MTTSLDTVETFGPTSYDDDMGLLCEKADVGALIA) the chain is Extracellular. A helical membrane pass occupies residues 35–62 (QFVPPLYSLVFMVGLLGNVVVVMILIKY). At 63 to 72 (RRLRIMTNIY) the chain is on the cytoplasmic side. The helical transmembrane segment at 73 to 93 (LLNLAISDLLFLFTLPFWIHY) threads the bilayer. Topologically, residues 94–107 (VRERNWVFSHGMCK) are extracellular. A disulfide bridge links Cys106 with Cys183. The chain crosses the membrane as a helical span at residues 108 to 129 (VLSGFYHTGLYSEIFFIILLTI). Residues 130 to 146 (DRYLAIVHAVFALRART) are Cytoplasmic-facing. Residues 147–171 (VTFGVITSIVTWGLAVLAALPEFIF) traverse the membrane as a helical segment. At 172–203 (YGTEKLFPKTLCSAIYPQDTVYSWRHFHTLKM) the chain is on the extracellular side. The helical transmembrane segment at 204 to 223 (TILCLALPLLVMAICYTGII) threads the bilayer. Residues 224–239 (KTLLRCPSKKKYKAIR) lie on the Cytoplasmic side of the membrane. Residues 240 to 264 (LIFVIMAVFFIFWTPYNVAILISTY) form a helical membrane-spanning segment. At 265 to 281 (QSVLFGLDCERSKHLDL) the chain is on the extracellular side. The helical transmembrane segment at 282–305 (FVLATEVIAYSHCCVNPVIYAFVG) threads the bilayer. Topologically, residues 306-355 (ERFRKYLRHFFHRHVLMHLGKYIPFLPSEKLERTSSVSPSTAEPELSIVF) are cytoplasmic.

It belongs to the G-protein coupled receptor 1 family.

The protein localises to the cell membrane. Its function is as follows. Receptor for C-C type chemokine. Binds and responds to a variety of chemokines, including CCL11, CCL26, CCL7, CCL13, RANTES(CCL5) and CCL15. Subsequently transduces a signal by increasing the intracellular calcium ions level. In addition acts as a possible functional receptor for NARS1. This is C-C chemokine receptor type 3 (CCR3) from Macaca mulatta (Rhesus macaque).